Here is a 363-residue protein sequence, read N- to C-terminus: Trichocyst matrix protein T4-A (363 aa).

The N-terminal stretch at methionine 1–alanine 17 is a signal peptide. A propeptide spanning residues arginine 18–glycine 52 is cleaved from the precursor. Positions valine 85–leucine 119 form a coiled coil. A propeptide spanning residues arginine 190–aspartate 221 is cleaved from the precursor. Positions alanine 244–alanine 352 form a coiled coil.

It belongs to the TMP family. In terms of processing, two components are produced by post-translational processing from the precursor peptide.

Its subcellular location is the trichocyst. Its function is as follows. Structural protein that crystallize inside the trichocyst matrix. The polypeptide is Trichocyst matrix protein T4-A (T4A) (Paramecium tetraurelia).